A 348-amino-acid polypeptide reads, in one-letter code: Propane 2-monooxygenase, reductase component (348 aa).

Positions 5 to 95 constitute a 2Fe-2S ferredoxin-type domain; that stretch reads HKINFEPVDI…DCTIELLNFD (91 aa). 4 residues coordinate [2Fe-2S] cluster: Cys-39, Cys-44, Cys-47, and Cys-79. The 102-residue stretch at 105-206 folds into the FAD-binding FR-type domain; that stretch reads IQDVRTEVLA…TGPYGSFTLK (102 aa).

Belongs to the bacterial ring-hydroxylating dioxygenase ferredoxin reductase family. As to quaternary structure, the propane 2-monooxygenase multicomponent enzyme system is composed of an electron transfer component and a monooxygenase component interacting with the effector protein MimD. The electron transfer component is composed of a reductase (MimB), and the monooxygenase component is formed by a large subunit (MimA) and a small subunit (MimC). FAD serves as cofactor. Requires [2Fe-2S] cluster as cofactor.

Its function is as follows. Reductase component of the propane 2-monooxygenase multicomponent enzyme system which is involved in the degradation of propane via the O2-dependent hydroxylation of propane. Reductase catalyzes the transfer of electrons from NADH or NADPH to monooxygenase. This is Propane 2-monooxygenase, reductase component from Mycolicibacterium goodii (Mycobacterium goodii).